The following is a 380-amino-acid chain: Protein Wnt-5a (380 aa).

Positions 1 to 40 (MRKNLWTFQFGGEASGLVGSAMVSQHFVVLLMSLYCLTQS) are cleaved as a signal peptide. Cys104 and Cys115 are oxidised to a cystine. Asn114 and Asn120 each carry an N-linked (GlcNAc...) asparagine glycan. Disulfide bonds link Cys154–Cys162, Cys164–Cys182, Cys238–Cys252, Cys240–Cys247, Cys309–Cys340, Cys325–Cys335, Cys339–Cys379, Cys355–Cys370, Cys357–Cys367, and Cys362–Cys363. A lipid anchor (O-palmitoleoyl serine; by PORCN) is attached at Ser244. N-linked (GlcNAc...) asparagine glycosylation is found at Asn312 and Asn326.

Belongs to the Wnt family. In terms of processing, palmitoleoylation is required for efficient binding to frizzled receptors. Depalmitoleoylation leads to Wnt signaling pathway inhibition. Found primarily in ectoderm with lower levels of expression in mesoderm. Detected in the head and tail with lower expression in the middle of the embryo. No expression was found in the notochord.

It localises to the secreted. Its subcellular location is the extracellular space. It is found in the extracellular matrix. Functionally, ligand for members of the frizzled family of seven transmembrane receptors. Can activate or inhibit canonical Wnt signaling, depending on receptor context. Plays a role in normal embryonic development. This Xenopus laevis (African clawed frog) protein is Protein Wnt-5a (wnt5a).